The chain runs to 886 residues: MKSNTPTEDSTKWMLESVEIDSMGESSSKEPEINLNKNEGGLKKNASRNLGVGSIIRTLSVSNWRKSGNLGSPSTRKSGNLGPPTNAVPKKTGPQRVERTTSSAARGLQSLRFLDRTVTGRERDAWRSIENRFNQFSVDGKLPKEKFGVCIGMGDTMEFAAEVYEALGRRRQIETENGIDKEQLKLFWEDMIKKDLDCRLQIFFDMCDKNGDGKLTEEEVKEVIVLSASANRLGNLKKNAAAYASLIMEELDPDHKGYIEMWQLEILLTGMVTNADTEKMKKSQTLTRAMIPERYRTPMSKYVSVTAELMHENWKKLWVLALWAIINVYLFMWKYEEFMRNPLYNITGRCVCAAKGAAETLKLNMALILVPVCRKTLTILRSTFLNRVVPFDDNINFHKVIAYMIAFQALLHTALHIFCNYPRLSSCSYDVFLTYAGAALGNTQPSYLGLMLTSVSITGVLMIFFMGFSFTLAMHYFRRNIVKLPKPFNVLAGFNAFWYAHHLLVLAYILLIIHGYYLIIEKPWYQKTTWMYLAVPMLFYASERLFSRLLQEHSHRVNVIKAIVYSGNVLALYVTKPPGFKYKSGMYMFVKCPDLSKFEWHPFSITSAPGDDYLSVHIRALGDWTTELRSRFAKTCEPTQAAAKPKPNSLMRMETRAAGVNPHIEESQVLFPKIFIKGPYGAPAQNYQKFDILLLVGLGIGATPFISILKDMLNHLKPGIPRSGQKYEGSVGGESIGGDSVSGGGGKKFPQRAYFFWVTREQASFDWFKGVMDDIAEYDKTHVIEMHNYLTSMYEAGDARSALIAMVQKLQHAKNGVDIVSESRIRTHFARPNWRKVFSELSSKHEACRIGVFYCGSPTLVRPLKELCQEFSLESSTRFTFHKENF.

Disordered stretches follow at residues 1–46 (MKSN…KKNA) and 64–103 (WRKSGNLGSPSTRKSGNLGPPTNAVPKKTGPQRVERTTSS). At 1–316 (MKSNTPTEDS…AELMHENWKK (316 aa)) the chain is on the cytoplasmic side. Polar residues predominate over residues 64-78 (WRKSGNLGSPSTRKS). EF-hand-like regions lie at residues 137–145 (SVDGKLPKE) and 171–183 (RQIETENGIDKEQ). 2 consecutive EF-hand domains span residues 195–230 (DLDCRLQIFFDMCDKNGDGKLTEEEVKEVIVLSASA) and 239–274 (NAAAYASLIMEELDPDHKGYIEMWQLEILLTGMVTN). Ca(2+) contacts are provided by D208, N210, D212, K214, and E219. S283 is modified (phosphoserine). A helical membrane pass occupies residues 317 to 337 (LWVLALWAIINVYLFMWKYEE). At 338 to 404 (FMRNPLYNIT…INFHKVIAYM (67 aa)) the chain is on the extracellular side. The 158-residue stretch at 355–512 (KGAAETLKLN…LLVLAYILLI (158 aa)) folds into the Ferric oxidoreductase domain. Residues 405–421 (IAFQALLHTALHIFCNY) traverse the membrane as a helical segment. The Cytoplasmic segment spans residues 422–456 (PRLSSCSYDVFLTYAGAALGNTQPSYLGLMLTSVS). The chain crosses the membrane as a helical span at residues 457-477 (ITGVLMIFFMGFSFTLAMHYF). Over 478–499 (RRNIVKLPKPFNVLAGFNAFWY) the chain is Extracellular. Residues 500-520 (AHHLLVLAYILLIIHGYYLII) traverse the membrane as a helical segment. Residues 521 to 528 (EKPWYQKT) lie on the Cytoplasmic side of the membrane. Residues 529–546 (TWMYLAVPMLFYASERLF) traverse the membrane as a helical segment. Residues 547-688 (SRLLQEHSHR…PYGAPAQNYQ (142 aa)) are Extracellular-facing. The region spanning 552–686 (EHSHRVNVIK…KGPYGAPAQN (135 aa)) is the FAD-binding FR-type domain. Residues 689–709 (KFDILLLVGLGIGATPFISIL) traverse the membrane as a helical segment. The Cytoplasmic portion of the chain corresponds to 710 to 886 (KDMLNHLKPG…TRFTFHKENF (177 aa)).

Belongs to the RBOH (TC 5.B.1.3) family. In terms of assembly, monomer and homodimer.

It is found in the membrane. Calcium-dependent NADPH oxidase that generates superoxide. This Arabidopsis thaliana (Mouse-ear cress) protein is Putative respiratory burst oxidase homolog protein H (RBOHH).